Here is a 467-residue protein sequence, read N- to C-terminus: UDP-N-acetylmuramate--L-alanine ligase (467 aa).

Residue 121–127 participates in ATP binding; it reads GSHGKTT.

Belongs to the MurCDEF family.

The protein localises to the cytoplasm. The catalysed reaction is UDP-N-acetyl-alpha-D-muramate + L-alanine + ATP = UDP-N-acetyl-alpha-D-muramoyl-L-alanine + ADP + phosphate + H(+). It functions in the pathway cell wall biogenesis; peptidoglycan biosynthesis. Its function is as follows. Cell wall formation. This chain is UDP-N-acetylmuramate--L-alanine ligase, found in Parasynechococcus marenigrum (strain WH8102).